A 126-amino-acid polypeptide reads, in one-letter code: 13 kDa ribonucleoprotein-associated protein (126 aa).

This sequence belongs to the eukaryotic ribosomal protein eL8 family. Component of the U3 snoRNP particle. Binds to the C'/D and B/C motifs in U3 snoRNA. Component of the 25S U4/U6.U5 tri-snRNP particle, a subcomplex of the spliceosome. Binds to the 5' stem-loop of U4 snRNA.

Its subcellular location is the nucleus. The protein localises to the nucleolus. Functionally, common component of the spliceosome and rRNA processing machinery. In association with the spliceosomal U4/U6.U5 tri-snRNP particle, required for splicing of pre-mRNA. In association with box C/D snoRNPs, required for processing of pre-ribosomal RNA (rRNA) and site-specific 2'-O-methylation of substrate RNAs. Essential for the accumulation and stability of U4 snRNA, U6 snRNA, and box C/D snoRNAs. This is 13 kDa ribonucleoprotein-associated protein (SNU13) from Candida albicans (strain SC5314 / ATCC MYA-2876) (Yeast).